The chain runs to 100 residues: NADH-quinone oxidoreductase subunit K (100 aa).

The next 3 helical transmembrane spans lie at 4–24, 29–49, and 61–81; these read VTWYLWLAAMLFTIGLSGVLL, LIVMMSVELMLNAANLTFLAF, and IAFFVIAVAAAEAAVGLAVVI.

This sequence belongs to the complex I subunit 4L family. NDH-1 is composed of 14 different subunits. Subunits NuoA, H, J, K, L, M, N constitute the membrane sector of the complex.

Its subcellular location is the cell inner membrane. It catalyses the reaction a quinone + NADH + 5 H(+)(in) = a quinol + NAD(+) + 4 H(+)(out). Its function is as follows. NDH-1 shuttles electrons from NADH, via FMN and iron-sulfur (Fe-S) centers, to quinones in the respiratory chain. The immediate electron acceptor for the enzyme in this species is believed to be ubiquinone. Couples the redox reaction to proton translocation (for every two electrons transferred, four hydrogen ions are translocated across the cytoplasmic membrane), and thus conserves the redox energy in a proton gradient. The protein is NADH-quinone oxidoreductase subunit K of Anaeromyxobacter sp. (strain Fw109-5).